The following is a 162-amino-acid chain: 3-dehydroquinate dehydratase (162 aa).

The active-site Proton acceptor is the tyrosine 22. Substrate is bound by residues asparagine 73, histidine 79, and aspartate 86. Residue histidine 99 is the Proton donor of the active site. Substrate is bound by residues 100–101 and arginine 110; that span reads LS.

It belongs to the type-II 3-dehydroquinase family. In terms of assembly, homododecamer.

The catalysed reaction is 3-dehydroquinate = 3-dehydroshikimate + H2O. Its pathway is metabolic intermediate biosynthesis; chorismate biosynthesis; chorismate from D-erythrose 4-phosphate and phosphoenolpyruvate: step 3/7. Catalyzes a trans-dehydration via an enolate intermediate. The polypeptide is 3-dehydroquinate dehydratase (Sulfurovum sp. (strain NBC37-1)).